The chain runs to 500 residues: MAQFGGFGGWSAMDVAAAAAAALGNVSGAVYHADPAAAVYASLVPGMAVVPGRAPPSAVQIEAARRWKELEKMALRSVNLMVTCAGAIQAGDYAAAAGSLSDAREIFAKMPTTRTGIGRVLTHFADALAERLFPAFPQSAPPPPPPRGEQRELFRGFYEAGPYLKFAHLAANQAILEAFEGCNSVHVIDFALTDGIQWPSLIQALAVRPGGPPFLRITGIGPHAAGNRDELRDVGLRLAEFARSCSVPFAFRGIAADQLDGLRPWMFQVAPGEAVAINSVLQLHRLLVDQDAAAAASFPAPIDGVLDWVASMNPRVFTVVEQEADHNKSSLLERFTNSLFYYASMFDSLEAISRHGGGDGAGNPLAEAYLQGEIADIVSREGSSRVERHEQMPRWVERLRRGGMTQLPLGATGLWQAAMQLREFSGAGFGVQENGGFLTLTWHSQRLYSASAWRATAGKKMTMMASGAADAMEESQNSNTNGGGGGSSGGGHGALNQIMQ.

One can recognise a GRAS domain in the interval 68-454 (KELEKMALRS…QRLYSASAWR (387 aa)). Positions 75-135 (LRSVNLMVTC…DALAERLFPA (61 aa)) are leucine repeat I (LRI). Residues 154 to 219 (FRGFYEAGPY…GGPPFLRITG (66 aa)) form a VHIID region. The VHIID motif lies at 185-189 (VHVID). Positions 233-265 (DVGLRLAEFARSCSVPFAFRGIAADQLDGLRPW) are leucine repeat II (LRII). Positions 275–376 (VAINSVLQLH…EAYLQGEIAD (102 aa)) are PFYRE. The LXXLL motif signature appears at 283–287 (LHRLL). Residues 379–454 (SREGSSRVER…QRLYSASAWR (76 aa)) form an SAW region. Residues 466–500 (SGAADAMEESQNSNTNGGGGGSSGGGHGALNQIMQ) are disordered. Residues 481–493 (NGGGGGSSGGGHG) are compositionally biased toward gly residues.

Belongs to the GRAS family. Expressed at low levels in leaf blades, leaf sheaths, rachis and flowers. Expressed in the embryo of immature seeds.

The protein localises to the nucleus. Its function is as follows. Probable transcriptional regulator that acts as a repressor of the gibberellin (GA) signaling pathway. Its repressive activity is weaker than that of SLR1. Its overexpression prevents the GA signaling pathway and induces a dwarf phenotype in Arabidopsis thaliana plants. In Oryza sativa subsp. japonica (Rice), this protein is Protein SLENDER RICE1-LIKE 2.